A 340-amino-acid chain; its full sequence is Ketol-acid reductoisomerase (NADP(+)) (340 aa).

The region spanning 3–182 (VQMEYEKDVK…GAARVGLLET (180 aa)) is the KARI N-terminal Rossmann domain. NADP(+) contacts are provided by residues 26–29 (YGSQ), arginine 49, serine 53, and 83–86 (DEIQ). Histidine 108 is an active-site residue. Glycine 134 is an NADP(+) binding site. The KARI C-terminal knotted domain occupies 183–328 (TYKEETEEDL…AELRKAMPFV (146 aa)). Mg(2+)-binding residues include aspartate 191, glutamate 195, glutamate 227, and glutamate 231. Residue serine 252 participates in substrate binding.

It belongs to the ketol-acid reductoisomerase family. It depends on Mg(2+) as a cofactor.

It carries out the reaction (2R)-2,3-dihydroxy-3-methylbutanoate + NADP(+) = (2S)-2-acetolactate + NADPH + H(+). The catalysed reaction is (2R,3R)-2,3-dihydroxy-3-methylpentanoate + NADP(+) = (S)-2-ethyl-2-hydroxy-3-oxobutanoate + NADPH + H(+). It participates in amino-acid biosynthesis; L-isoleucine biosynthesis; L-isoleucine from 2-oxobutanoate: step 2/4. Its pathway is amino-acid biosynthesis; L-valine biosynthesis; L-valine from pyruvate: step 2/4. Functionally, involved in the biosynthesis of branched-chain amino acids (BCAA). Catalyzes an alkyl-migration followed by a ketol-acid reduction of (S)-2-acetolactate (S2AL) to yield (R)-2,3-dihydroxy-isovalerate. In the isomerase reaction, S2AL is rearranged via a Mg-dependent methyl migration to produce 3-hydroxy-3-methyl-2-ketobutyrate (HMKB). In the reductase reaction, this 2-ketoacid undergoes a metal-dependent reduction by NADPH to yield (R)-2,3-dihydroxy-isovalerate. In Streptococcus gordonii (strain Challis / ATCC 35105 / BCRC 15272 / CH1 / DL1 / V288), this protein is Ketol-acid reductoisomerase (NADP(+)).